The following is a 312-amino-acid chain: Acetyl-coenzyme A carboxylase carboxyl transferase subunit beta (312 aa).

Residues 24 to 293 enclose the CoA carboxyltransferase N-terminal domain; that stretch reads LWIKCPDSGQ…PHADEVAAPP (270 aa). A disordered region spans residues 286–312; it reads ADEVAAPPPPDVEGPPPAAEPVALPPA. Residues 291–312 show a composition bias toward pro residues; the sequence is APPPPDVEGPPPAAEPVALPPA.

This sequence belongs to the AccD/PCCB family. As to quaternary structure, acetyl-CoA carboxylase is a heterohexamer composed of biotin carboxyl carrier protein (AccB), biotin carboxylase (AccC) and two subunits each of ACCase subunit alpha (AccA) and ACCase subunit beta (AccD).

It localises to the cytoplasm. It catalyses the reaction N(6)-carboxybiotinyl-L-lysyl-[protein] + acetyl-CoA = N(6)-biotinyl-L-lysyl-[protein] + malonyl-CoA. It functions in the pathway lipid metabolism; malonyl-CoA biosynthesis; malonyl-CoA from acetyl-CoA: step 1/1. Functionally, component of the acetyl coenzyme A carboxylase (ACC) complex. Biotin carboxylase (BC) catalyzes the carboxylation of biotin on its carrier protein (BCCP) and then the CO(2) group is transferred by the transcarboxylase to acetyl-CoA to form malonyl-CoA. This chain is Acetyl-coenzyme A carboxylase carboxyl transferase subunit beta, found in Afipia carboxidovorans (strain ATCC 49405 / DSM 1227 / KCTC 32145 / OM5) (Oligotropha carboxidovorans).